A 67-amino-acid polypeptide reads, in one-letter code: uncharacterized protein (67 aa).

This is an uncharacterized protein from Bacillus subtilis (strain 168).